Consider the following 272-residue polypeptide: Orotidine 5'-phosphate decarboxylase (272 aa).

The active-site Proton donor is the K96.

Belongs to the OMP decarboxylase family. Type 2 subfamily.

It catalyses the reaction orotidine 5'-phosphate + H(+) = UMP + CO2. It functions in the pathway pyrimidine metabolism; UMP biosynthesis via de novo pathway; UMP from orotate: step 2/2. The chain is Orotidine 5'-phosphate decarboxylase from Christiangramia forsetii (strain DSM 17595 / CGMCC 1.15422 / KT0803) (Gramella forsetii).